Consider the following 113-residue polypeptide: Hemerythrin (113 aa).

The Fe cation site is built by His25, His54, Glu58, His73, His77, His101, and Asp106.

Belongs to the hemerythrin family. As to quaternary structure, homotrimer.

Functionally, hemerythrin is a respiratory protein in blood cells of certain marine worms. The oxygen-binding site in each chain contains two iron atoms. This chain is Hemerythrin, found in Siphonosoma cumanense (Sipunculan worm).